The primary structure comprises 37 residues: Cytochrome b6-f complex subunit 5 (37 aa).

The chain crosses the membrane as a helical span at residues 5–25 (LLSGVVLGLILVTLSGLFFAA).

It belongs to the PetG family. The 4 large subunits of the cytochrome b6-f complex are cytochrome b6, subunit IV (17 kDa polypeptide, PetD), cytochrome f and the Rieske protein, while the 4 small subunits are PetG, PetL, PetM and PetN. The complex functions as a dimer.

It is found in the cellular thylakoid membrane. In terms of biological role, component of the cytochrome b6-f complex, which mediates electron transfer between photosystem II (PSII) and photosystem I (PSI), cyclic electron flow around PSI, and state transitions. PetG is required for either the stability or assembly of the cytochrome b6-f complex. In Trichodesmium erythraeum (strain IMS101), this protein is Cytochrome b6-f complex subunit 5.